The chain runs to 2040 residues: MEHKEVVLLLLLFLKSAAPEQSHVVQDCYHGDGQSYRGTYSTTVTGRTCQAWSSMTPHQHNRTTENYPNAGLIMNYCRNPDAVAAPYCYTRDPGVRWEYCNLTQCSDAEGTAVAPPTVTPVPSLEAPSEQAPTEQRPGVQECYHGNGQSYRGTYSTTVTGRTCQAWSSMTPHSHSRTPEYYPNAGLIMNYCRNPDAVAAPYCYTRDPGVRWEYCNLTQCSDAEGTAVAPPTVTPVPSLEAPSEQAPTEQRPGVQECYHGNGQSYRGTYSTTVTGRTCQAWSSMTPHSHSRTPEYYPNAGLIMNYCRNPDAVAAPYCYTRDPGVRWEYCNLTQCSDAEGTAVAPPTVTPVPSLEAPSEQAPTEQRPGVQECYHGNGQSYRGTYSTTVTGRTCQAWSSMTPHSHSRTPEYYPNAGLIMNYCRNPDAVAAPYCYTRDPGVRWEYCNLTQCSDAEGTAVAPPTVTPVPSLEAPSEQAPTEQRPGVQECYHGNGQSYRGTYSTTVTGRTCQAWSSMTPHSHSRTPEYYPNAGLIMNYCRNPDAVAAPYCYTRDPGVRWEYCNLTQCSDAEGTAVAPPTVTPVPSLEAPSEQAPTEQRPGVQECYHGNGQSYRGTYSTTVTGRTCQAWSSMTPHSHSRTPEYYPNAGLIMNYCRNPDAVAAPYCYTRDPGVRWEYCNLTQCSDAEGTAVAPPTVTPVPSLEAPSEQAPTEQRPGVQECYHGNGQSYRGTYSTTVTGRTCQAWSSMTPHSHSRTPEYYPNAGLIMNYCRNPDAVAAPYCYTRDPGVRWEYCNLTQCSDAEGTAVAPPTVTPVPSLEAPSEQAPTEQRPGVQECYHGNGQSYRGTYSTTVTGRTCQAWSSMTPHSHSRTPEYYPNAGLIMNYCRNPDPVAAPYCYTRDPSVRWEYCNLTQCSDAEGTAVAPPTITPIPSLEAPSEQAPTEQRPGVQECYHGNGQSYQGTYFITVTGRTCQAWSSMTPHSHSRTPAYYPNAGLIKNYCRNPDPVAAPWCYTTDPSVRWEYCNLTRCSDAEWTAFVPPNVILAPSLEAFFEQALTEETPGVQDCYYHYGQSYRGTYSTTVTGRTCQAWSSMTPHQHSRTPENYPNAGLTRNYCRNPDAEIRPWCYTMDPSVRWEYCNLTQCLVTESSVLATLTVVPDPSTEASSEEAPTEQSPGVQDCYHGDGQSYRGSFSTTVTGRTCQSWSSMTPHWHQRTTEYYPNGGLTRNYCRNPDAEISPWCYTMDPNVRWEYCNLTQCPVTESSVLATSTAVSEQAPTEQSPTVQDCYHGDGQSYRGSFSTTVTGRTCQSWSSMTPHWHQRTTEYYPNGGLTRNYCRNPDAEIRPWCYTMDPSVRWEYCNLTQCPVMESTLLTTPTVVPVPSTELPSEEAPTENSTGVQDCYRGDGQSYRGTLSTTITGRTCQSWSSMTPHWHRRIPLYYPNAGLTRNYCRNPDAEIRPWCYTMDPSVRWEYCNLTRCPVTESSVLTTPTVAPVPSTEAPSEQAPPEKSPVVQDCYHGDGRSYRGISSTTVTGRTCQSWSSMIPHWHQRTPENYPNAGLTENYCRNPDSGKQPWCYTTDPCVRWEYCNLTQCSETESGVLETPTVVPVPSMEAHSEAAPTEQTPVVRQCYHGNGQSYRGTFSTTVTGRTCQSWSSMTPHRHQRTPENYPNDGLTMNYCRNPDADTGPWCFTMDPSIRWEYCNLTRCSDTEGTVVAPPTVIQVPSLGPPSEQDCMFGNGKGYRGKKATTVTGTPCQEWAAQEPHRHSTFIPGTNKWAGLEKNYCRNPDGDINGPWCYTMNPRKLFDYCDIPLCASSSFDCGKPQVEPKKCPGSIVGGCVAHPHSWPWQVSLRTRFGKHFCGGTLISPEWVLTAAHCLKKSSRPSSYKVILGAHQEVNLESHVQEIEVSRLFLEPTQADIALLKLSRPAVITDKVMPACLPSPDYMVTARTECYITGWGETQGTFGTGLLKEAQLLVIENEVCNHYKYICAEHLARGTDSCQGDSGGPLVCFEKDKYILQGVTSWGLGCARPNKPGVYARVSRFVTWIEGMMRNN.

The first 19 residues, M1 to P19, serve as a signal peptide directing secretion. Kringle domains follow at residues D27–C105, E141–C219, E255–C333, E369–C447, E483–C561, E597–C675, E711–C789, E825–C903, E939–C1017, and D1053–C1131. Disulfide bonds link C28–C105, C49–C88, C77–C100, C142–C219, C163–C202, C191–C214, C256–C333, C277–C316, C305–C328, C370–C447, C391–C430, C419–C442, C484–C561, C505–C544, C533–C556, C598–C675, C619–C658, C647–C670, C712–C789, C733–C772, C761–C784, C826–C903, C847–C886, C875–C898, C940–C1017, C961–C1000, C989–C1012, C1054–C1131, C1075–C1114, and C1103–C1126. N61 carries N-linked (GlcNAc...) asparagine glycosylation. An N-linked (GlcNAc...) asparagine glycan is attached at N101. N215 is a glycosylation site (N-linked (GlcNAc...) asparagine). N329 carries N-linked (GlcNAc...) asparagine glycosylation. N443 is a glycosylation site (N-linked (GlcNAc...) asparagine). N-linked (GlcNAc...) asparagine glycosylation occurs at N557. N671 is a glycosylation site (N-linked (GlcNAc...) asparagine). N785 is a glycosylation site (N-linked (GlcNAc...) asparagine). N-linked (GlcNAc...) asparagine glycosylation is present at N899. N-linked (GlcNAc...) asparagine glycosylation is present at N1013. N1127 is a glycosylation site (N-linked (GlcNAc...) asparagine). Residues D1147–Q1166 form a disordered region. 2 Kringle domains span residues D1167–C1245 and D1273–C1351. Disulfide bonds link C1168-C1245, C1189-C1228, C1217-C1240, C1274-C1351, C1295-C1334, and C1323-C1346. N1241 carries N-linked (GlcNAc...) asparagine glycosylation. 2 N-linked (GlcNAc...) asparagine glycosylation sites follow: N1347 and N1381. The tract at residues V1365 to C1388 is disordered. Residues D1387–C1465 enclose the Kringle 13 domain. Cystine bridges form between C1388–C1465, C1409–C1448, and C1437–C1460. N1461 carries an N-linked (GlcNAc...) asparagine glycan. The interval P1476–P1497 is disordered. Kringle domains are found at residues D1501 to C1579, Q1615 to C1693, and D1719 to C1799. Cystine bridges form between C1502–C1579, C1523–C1562, C1551–C1574, C1616–C1693, C1637–C1676, C1665–C1688, C1720–C1799, C1741–C1782, C1770–C1794, and C1846–C1862. N-linked (GlcNAc...) asparagine glycosylation occurs at N1575. N1689 carries an N-linked (GlcNAc...) asparagine glycan. In terms of domain architecture, Peptidase S1 spans I1820 to R2038. Active-site charge relay system residues include H1861 and D1904. Cystine bridges form between C1938-C1996, C1968-C1975, and C1986-C2014. S1990 acts as the Charge relay system in catalysis.

It belongs to the peptidase S1 family. Plasminogen subfamily. In terms of assembly, disulfide-linked to apo-B100. Binds to fibronectin and decorin. N- and O-glycosylated. The N-glycans are complex biantennary structures present in either a mono- or disialylated state. The O-glycans are mostly (80%) represented by the monosialylated core type I structure, NeuNAcalpha2-3Galbeta1-3GalNAc, with smaller amounts of disialylated and non-sialylated O-glycans also detected.

In terms of biological role, apo(a) is the main constituent of lipoprotein(a) (Lp(a)). It has serine proteinase activity and is able of autoproteolysis. Inhibits tissue-type plasminogen activator 1. Lp(a) may be a ligand for megalin/Gp 330. The protein is Apolipoprotein(a) (LPA) of Homo sapiens (Human).